Here is a 668-residue protein sequence, read N- to C-terminus: DNA ligase (668 aa).

NAD(+) is bound by residues 34-38, 83-84, and glutamate 114; these read DTEYD and SL. Residue lysine 116 is the N6-AMP-lysine intermediate of the active site. Positions 137, 171, 286, and 310 each coordinate NAD(+). Residues cysteine 404, cysteine 407, cysteine 422, and cysteine 427 each contribute to the Zn(2+) site. The BRCT domain occupies 588 to 668; it reads NSDSIIANKT…FFDLLKSEKG (81 aa).

It belongs to the NAD-dependent DNA ligase family. LigA subfamily. Mg(2+) serves as cofactor. Mn(2+) is required as a cofactor.

The enzyme catalyses NAD(+) + (deoxyribonucleotide)n-3'-hydroxyl + 5'-phospho-(deoxyribonucleotide)m = (deoxyribonucleotide)n+m + AMP + beta-nicotinamide D-nucleotide.. Functionally, DNA ligase that catalyzes the formation of phosphodiester linkages between 5'-phosphoryl and 3'-hydroxyl groups in double-stranded DNA using NAD as a coenzyme and as the energy source for the reaction. It is essential for DNA replication and repair of damaged DNA. In Mycoplasma capricolum subsp. capricolum (strain California kid / ATCC 27343 / NCTC 10154), this protein is DNA ligase.